A 563-amino-acid chain; its full sequence is Inositol-3-phosphate synthase 1-B (563 aa).

The protein belongs to the myo-inositol 1-phosphate synthase family. The cofactor is NAD(+).

Its subcellular location is the cytoplasm. It catalyses the reaction D-glucose 6-phosphate = 1D-myo-inositol 3-phosphate. It participates in polyol metabolism; myo-inositol biosynthesis; myo-inositol from D-glucose 6-phosphate: step 1/2. In terms of biological role, key enzyme in myo-inositol biosynthesis pathway that catalyzes the conversion of glucose 6-phosphate to 1-myo-inositol 1-phosphate in a NAD-dependent manner. Rate-limiting enzyme in the synthesis of all inositol-containing compounds. The sequence is that of Inositol-3-phosphate synthase 1-B (isyna1-b) from Xenopus laevis (African clawed frog).